A 146-amino-acid polypeptide reads, in one-letter code: Anti-sigma F factor (146 aa).

This sequence belongs to the anti-sigma-factor family.

The catalysed reaction is L-seryl-[protein] + ATP = O-phospho-L-seryl-[protein] + ADP + H(+). The enzyme catalyses L-threonyl-[protein] + ATP = O-phospho-L-threonyl-[protein] + ADP + H(+). Binds to sigma F and blocks its ability to form an RNA polymerase holoenzyme (E-sigma F). Phosphorylates SpoIIAA on a serine residue. This phosphorylation may enable SpoIIAA to act as an anti-anti-sigma factor that counteracts SpoIIAB and thus releases sigma F from inhibition. The chain is Anti-sigma F factor from Bacillus anthracis (strain A0248).